The sequence spans 404 residues: Mevalonate kinase (404 aa).

Residues Lys-12, Ser-130, and 135 to 141 contribute to the ATP site; that span reads GAGLGSS. Mg(2+) contacts are provided by Ser-141 and Glu-184. Residue Asp-195 is the Proton acceptor of the active site.

This sequence belongs to the GHMP kinase family. Mevalonate kinase subfamily. In terms of assembly, homodimer. Requires Mg(2+) as cofactor.

It localises to the cytoplasm. The protein resides in the nucleus. The catalysed reaction is (R)-mevalonate + ATP = (R)-5-phosphomevalonate + ADP + H(+). Its pathway is isoprenoid biosynthesis; isopentenyl diphosphate biosynthesis via mevalonate pathway; isopentenyl diphosphate from (R)-mevalonate: step 1/3. Its activity is regulated as follows. Farnesyl pyrophosphate and geranyl pyrophosphate inhibit mevalonate kinase by binding competitively at the ATP-binding site. Mevalonate kinase; part of the second module of ergosterol biosynthesis pathway that includes the middle steps of the pathway. Erg12 converts mevalonate into 5-phosphomevalonate. The second module is carried out in the vacuole and involves the formation of farnesyl diphosphate, which is also an important intermediate in the biosynthesis of ubiquinone, dolichol, heme and prenylated proteins. Activity by the mevalonate kinase erg12 first converts mevalonate into 5-phosphomevalonate. 5-phosphomevalonate is then further converted to 5-diphosphomevalonate by the phosphomevalonate kinase erg8. The diphosphomevalonate decarboxylase mvd1 then produces isopentenyl diphosphate. The isopentenyl-diphosphate delta-isomerase idi1 then catalyzes the 1,3-allylic rearrangement of the homoallylic substrate isopentenyl (IPP) to its highly electrophilic allylic isomer, dimethylallyl diphosphate (DMAPP). Finally the farnesyl diphosphate synthase fps1 catalyzes the sequential condensation of isopentenyl pyrophosphate with dimethylallyl pyrophosphate, and then with the resultant geranylpyrophosphate to the ultimate product farnesyl pyrophosphate. The chain is Mevalonate kinase (erg12) from Schizosaccharomyces pombe (strain 972 / ATCC 24843) (Fission yeast).